Consider the following 188-residue polypeptide: UPF0340 protein BH3766 (188 aa).

The protein belongs to the UPF0340 family.

The polypeptide is UPF0340 protein BH3766 (Halalkalibacterium halodurans (strain ATCC BAA-125 / DSM 18197 / FERM 7344 / JCM 9153 / C-125) (Bacillus halodurans)).